Here is a 1020-residue protein sequence, read N- to C-terminus: Vacuolar membrane protease (1020 aa).

The Cytoplasmic portion of the chain corresponds to 1 to 11 (MKCHNPFGFRV). The chain crosses the membrane as a helical span at residues 12–32 (GPVTFWTIIIYLALLVPLLWI). Residues 33–410 (HETVPPAPSS…GFAVFGLRGL (378 aa)) lie on the Vacuolar side of the membrane. N-linked (GlcNAc...) asparagine glycans are attached at residues N50, N94, and N130. Zn(2+) contacts are provided by H191 and D203. E237 (proton acceptor) is an active-site residue. Residues E238, E263, and H336 each coordinate Zn(2+). The helical transmembrane segment at 411-431 (FAWSLTLLIVSPLILAILVFI) threads the bilayer. Residues 432 to 467 (LNRHDKLYFFSRKINVHNEGSEDPVSIGGFRGFTRF) lie on the Cytoplasmic side of the membrane. The helical transmembrane segment at 468–488 (PIAVGFSGALTLASAFLLTKI) threads the bilayer. Residues 489 to 491 (NPM) lie on the Vacuolar side of the membrane. Residues 492–512 (IVYSSEYAVWGMMLSLFYVSL) traverse the membrane as a helical segment. Residues 513–529 (WMTLKGSSAVRPSALQR) lie on the Cytoplasmic side of the membrane. Residues 530–550 (GYIHIWLFIVSWGLLIVVAVT) form a helical membrane-spanning segment. Residues 551-561 (EDRLKIASGYP) are Vacuolar-facing. A helical transmembrane segment spans residues 562–582 (VVFLHSALFLSTVISFLELFG). Topologically, residues 583–690 (LTKKHDYARR…RLPGWTWILQ (108 aa)) are cytoplasmic. Residues 609-648 (DDALIAPDTPNDEAEDSDGEDSEHEPTETTPLRAGGDSRV) form a disordered region. The segment covering 618–631 (PNDEAEDSDGEDSE) has biased composition (acidic residues). Residues 691–711 (FLLLAPINVILWGQIGLFAVA) form a helical membrane-spanning segment. The Vacuolar segment spans residues 712–724 (ATQAGGADGGSVL). A helical membrane pass occupies residues 725–745 (TTYLIIAVLSIVILVPLAPFI). At 746 to 750 (HRVHY) the chain is on the cytoplasmic side. Residues 751–771 (YVPIILFAAFAGTLIYNLIAF) form a helical membrane-spanning segment. At 772-1020 (PFSANNRYKI…VGLVRPVKRF (249 aa)) the chain is on the vacuolar side. N851, N868, and N873 each carry an N-linked (GlcNAc...) asparagine glycan.

Belongs to the peptidase M28 family. The cofactor is Zn(2+).

Its subcellular location is the vacuole membrane. May be involved in vacuolar sorting and osmoregulation. The sequence is that of Vacuolar membrane protease from Verticillium alfalfae (strain VaMs.102 / ATCC MYA-4576 / FGSC 10136) (Verticillium wilt of alfalfa).